We begin with the raw amino-acid sequence, 637 residues long: Neuroendocrine convertase 2 (637 aa).

Residues 1 to 24 (MEGGCGSQWKAAGLLFCVMVFASA) form the signal peptide. Residues 25-108 (ERPVFTNHFL…QQEGFDRKKR (84 aa)) constitute a propeptide that is removed on maturation. A Peptidase S8 domain is found at 128-452 (QWYLFNTGQA…YGVLDAGAMV (325 aa)). Catalysis depends on charge relay system residues Asp166 and His207. Intrachain disulfides connect Cys224–Cys375 and Cys316–Cys346. The N-linked (GlcNAc...) asparagine glycan is linked to Asn374. The active-site Charge relay system is the Ser383. In terms of domain architecture, P/Homo B spans 460–596 (TVPERFHCVG…TLMLHGTQSA (137 aa)). Cys467 and Cys493 are oxidised to a cystine. Asn513 and Asn523 each carry an N-linked (GlcNAc...) asparagine glycan.

This sequence belongs to the peptidase S8 family. Furin subfamily.

The protein localises to the cytoplasmic vesicle. It localises to the secretory vesicle. The protein resides in the secreted. It catalyses the reaction Release of protein hormones and neuropeptides from their precursors, generally by hydrolysis of -Lys-Arg-|- bonds.. Functionally, serine endopeptidase which is involved in the processing of hormone and other protein precursors at sites comprised of pairs of basic amino acid residues. Responsible for the release of glucagon from proglucagon in pancreatic A cells. The protein is Neuroendocrine convertase 2 (Pcsk2) of Rattus norvegicus (Rat).